A 302-amino-acid polypeptide reads, in one-letter code: Sulfate adenylyltransferase subunit 2 (302 aa).

The protein belongs to the PAPS reductase family. CysD subfamily. In terms of assembly, heterodimer composed of CysD, the smaller subunit, and CysN.

It carries out the reaction sulfate + ATP + H(+) = adenosine 5'-phosphosulfate + diphosphate. It participates in sulfur metabolism; hydrogen sulfide biosynthesis; sulfite from sulfate: step 1/3. In terms of biological role, with CysN forms the ATP sulfurylase (ATPS) that catalyzes the adenylation of sulfate producing adenosine 5'-phosphosulfate (APS) and diphosphate, the first enzymatic step in sulfur assimilation pathway. APS synthesis involves the formation of a high-energy phosphoric-sulfuric acid anhydride bond driven by GTP hydrolysis by CysN coupled to ATP hydrolysis by CysD. The sequence is that of Sulfate adenylyltransferase subunit 2 from Escherichia coli O157:H7 (strain EC4115 / EHEC).